The chain runs to 1270 residues: Myosin-1 (1270 aa).

Positions 1–40 (MGHSRRPAGGEKKSRGFGRSKAAADVGDGRQAGKPQVKKA) are disordered. The Myosin motor domain maps to 50 to 729 (IGVSDLTLLS…TLFALETMRD (680 aa)). 143–150 (GESGAGKT) contributes to the ATP binding site. Serine 371 is modified (phosphoserine). Residues 418–500 (SIGILDIYGF…PGVFAALNDA (83 aa)) form an actin-binding region. IQ domains lie at 733–753 (HNMA…RIEC) and 754–779 (AIRI…QGHQ). The TH1 domain occupies 787–980 (RRRMSLLGSR…TIHTSAGEPP (194 aa)). Disordered stretches follow at residues 960-1102 (GASN…VLYD) and 1144-1270 (PEAY…DDEW). The span at 963-974 (NVDSYKSSTIHT) shows a compositional bias: polar residues. Pro residues predominate over residues 1023–1058 (ARQPMPQPTPQPAAVQPPPAPRPAVSPAAQPRPVPQ). Low complexity predominate over residues 1059–1078 (PVAAVAAAQHTRNASSSSTR). The segment covering 1079-1088 (APPPPPPATP) has biased composition (pro residues). Positions 1092–1153 (QRKPMAKVLY…PEAYLEEQVA (62 aa)) constitute an SH3 domain. Residues 1157–1167 (KPAPPPPPPAA) are compositionally biased toward pro residues. 2 stretches are compositionally biased toward low complexity: residues 1168–1186 (PRAS…VAAK) and 1238–1252 (NSAS…LAEA).

It belongs to the TRAFAC class myosin-kinesin ATPase superfamily. Myosin family. In terms of processing, phosphorylation of the TEDS site (Ser-371) is required for the polarization of the actin cytoskeleton. Phosphorylation probably activates the myosin-I ATPase activity.

The protein localises to the cytoplasm. It localises to the cytoskeleton. Its subcellular location is the actin patch. Type-I myosin implicated in the organization of the actin cytoskeleton. Required for proper actin cytoskeleton polarization. At the cell cortex, assembles in patch-like structures together with proteins from the actin-polymerizing machinery and promotes actin assembly. Functions as actin nucleation-promoting factor (NPF) for the Arp2/3 complex. Plays an important role in polarized growth, spore germination, hyphal morphogenesis, and septal wall formation. This Aspergillus niger (strain ATCC MYA-4892 / CBS 513.88 / FGSC A1513) protein is Myosin-1 (myoA).